The following is a 185-amino-acid chain: CDP-diacylglycerol--glycerol-3-phosphate 3-phosphatidyltransferase (185 aa).

The next 4 helical transmembrane spans lie at 7–26 (IFLT…AFYL), 33–52 (FITT…DGYL), 89–108 (FWIT…ISAL), and 151–172 (IAAI…IQYL).

It belongs to the CDP-alcohol phosphatidyltransferase class-I family.

The protein resides in the cell membrane. It carries out the reaction a CDP-1,2-diacyl-sn-glycerol + sn-glycerol 3-phosphate = a 1,2-diacyl-sn-glycero-3-phospho-(1'-sn-glycero-3'-phosphate) + CMP + H(+). The protein operates within phospholipid metabolism; phosphatidylglycerol biosynthesis; phosphatidylglycerol from CDP-diacylglycerol: step 1/2. In terms of biological role, this protein catalyzes the committed step to the synthesis of the acidic phospholipids. The sequence is that of CDP-diacylglycerol--glycerol-3-phosphate 3-phosphatidyltransferase (pgsA) from Haemophilus influenzae (strain ATCC 51907 / DSM 11121 / KW20 / Rd).